A 928-amino-acid polypeptide reads, in one-letter code: DNA mismatch repair protein MutS (928 aa).

An ATP-binding site is contributed by 613-620 (GPNMAGKS). Basic and acidic residues predominate over residues 854–872 (KAKSNKDDHRIDEKTENSS). Residues 854–880 (KAKSNKDDHRIDEKTENSSKKHKNKDS) are disordered.

Belongs to the DNA mismatch repair MutS family.

This protein is involved in the repair of mismatches in DNA. It is possible that it carries out the mismatch recognition step. This protein has a weak ATPase activity. The protein is DNA mismatch repair protein MutS of Clostridium beijerinckii (strain ATCC 51743 / NCIMB 8052) (Clostridium acetobutylicum).